The chain runs to 469 residues: NADH-quinone oxidoreductase subunit N (469 aa).

Transmembrane regions (helical) follow at residues 2–22 (IALLPFILSLAATFINIFLCV), 28–48 (RYSINLNILFWVIIFISFFIV), 70–90 (FSFCFGVVLSALMIIFLISSF), 101–121 (EMFALASLAGFGLLAMSLSVE), 122–142 (LILTLIFLEVASISIYAMIAM), 157–177 (FLLSSFMSAFYLLGAAFVFGV), 194–214 (FLSIIGMILVLSMMFFKIAIF), 233–253 (GFLASAFKLASFAILIKLCFL), 261–281 (ILQGIFAILAILSMFAGNLLS), 290–310 (ILIAAGIVHSGYIFINLSSVG), 315–335 (IYPAIFYLSTYTIVVGFLFAI), 361–381 (AFAFTVICLSFIGFPYSVGFL), 398–418 (LAIFGIINTIFSVYYYLKIII), and 447–467 (ILFIILEGSGIFSIISFLNLF).

Belongs to the complex I subunit 2 family. In terms of assembly, NDH-1 is composed of 14 different subunits. Subunits NuoA, H, J, K, L, M, N constitute the membrane sector of the complex.

The protein resides in the cell inner membrane. The catalysed reaction is a quinone + NADH + 5 H(+)(in) = a quinol + NAD(+) + 4 H(+)(out). NDH-1 shuttles electrons from NADH, via FMN and iron-sulfur (Fe-S) centers, to quinones in the respiratory chain. The immediate electron acceptor for the enzyme in this species is believed to be ubiquinone. Couples the redox reaction to proton translocation (for every two electrons transferred, four hydrogen ions are translocated across the cytoplasmic membrane), and thus conserves the redox energy in a proton gradient. The protein is NADH-quinone oxidoreductase subunit N of Campylobacter fetus subsp. fetus (strain 82-40).